A 323-amino-acid chain; its full sequence is Mortality factor 4-like protein 1 (323 aa).

A Tudor-knot domain is found at glutamine 12–valine 62. The interval glutamine 77 to threonine 143 is disordered. The sufficient for interaction with SIN3A stretch occupies residues proline 94–valine 227. Lysine 104 carries the N6-acetyllysine modification. An interaction with RB1-1 region spans residues serine 125–aspartate 191. Residues threonine 149–alanine 303 are sufficient for interaction with PHF12. The region spanning asparagine 152–valine 323 is the MRG domain. Positions leucine 284 to leucine 305 are interaction with RB1-2.

In terms of assembly, component of the NuA4 histone acetyltransferase complex which contains the catalytic subunit KAT5/TIP60 and the subunits EP400, TRRAP/PAF400, BRD8/SMAP, EPC1, DMAP1/DNMAP1, RUVBL1/TIP49, RUVBL2, ING3, actin, ACTL6A/BAF53A, MORF4L1/MRG15, MORF4L2/MRGX, MRGBP, YEATS4/GAS41, VPS72/YL1 and MEAF6. The NuA4 complex interacts with MYC and the adenovirus E1A protein. MORF4L1 may also participate in the formation of NuA4 related complexes which lack the KAT5/TIP60 catalytic subunit, but which include the SWI/SNF related protein SRCAP. Component of the mSin3A histone deacetylase complex, which includes SIN3A, HDAC2, ARID4B, MORF4L1, RBBP4/RbAp48, and RBBP7/RbAp46. May also interact with PHF12 and one or more as yet undefined members of the TLE (transducin-like enhancer of split) family of transcriptional repressors. Component of the SIN3B complex, which includes SIN3B, HDAC2 or HDAC1, PHF12 and MORF4L1. Interacts with RB1 and KAT8. Interacts with the N-terminus of MRFAP1. Found in a complex composed of MORF4L1, MRFAP1 and RB1. Interacts with the entire BRCA complex, which contains BRCA1, PALB2, BRCA2 and RAD51. Interacts with PALB2. Forms a complex with MSL1 and NUPR1.

Its subcellular location is the nucleus. In terms of biological role, component of the NuA4 histone acetyltransferase (HAT) complex which is involved in transcriptional activation of select genes principally by acetylation of nucleosomal histones H4 and H2A. This modification may both alter nucleosome - DNA interactions and promote interaction of the modified histones with other proteins which positively regulate transcription. This complex may be required for the activation of transcriptional programs associated with oncogene and proto-oncogene mediated growth induction, tumor suppressor mediated growth arrest and replicative senescence, apoptosis, and DNA repair. The NuA4 complex ATPase and helicase activities seem to be, at least in part, contributed by the association of RUVBL1 and RUVBL2 with EP400. NuA4 may also play a direct role in DNA repair when directly recruited to sites of DNA damage. As part of the SIN3B complex represses transcription and counteracts the histone acetyltransferase activity of EP300 through the recognition H3K27ac marks by PHF12 and the activity of the histone deacetylase HDAC2. SIN3B complex is recruited downstream of the constitutively active genes transcriptional start sites through interaction with histones and mitigates histone acetylation and RNA polymerase II progression within transcribed regions contributing to the regulation of transcription. Required for homologous recombination repair (HRR) and resistance to mitomycin C (MMC). Involved in the localization of PALB2, BRCA2 and RAD51, but not BRCA1, to DNA-damage foci. This Rattus norvegicus (Rat) protein is Mortality factor 4-like protein 1 (Morf4l1).